A 1594-amino-acid chain; its full sequence is Calpain-D (1594 aa).

2 RanBP2-type zinc fingers span residues 1-35 (MGTISSVLQWSCTKCNTINPTESLKCFNCGTVRKV) and 135-164 (LNRRWVCHACGTDNSSVTWHCLICDTVSYL). 5 disordered regions span residues 210-256 (EEQH…TAID), 371-400 (EPQQKSPANPQQLQRKTQREPAAVSMNPTQ), 420-459 (ASSSSVSSSSNHHHHHHSNSNSNSSGNSNIINNNSSSSSG), 524-543 (KKKQQIASESQTNNNTGSGE), and 554-606 (AGLG…RLSG). Over residues 215–229 (HQLHSQHLHKRHLKG) the composition is skewed to basic residues. Composition is skewed to polar residues over residues 246–255 (RRTQSLSTAI) and 371–385 (EPQQKSPANPQQLQR). At S250 the chain carries Phosphoserine. Residues 438 to 459 (NSNSNSSGNSNIINNNSSSSSG) show a composition bias toward low complexity. A compositionally biased stretch (polar residues) spans 528 to 541 (QIASESQTNNNTGS). A RanBP2-type 3 zinc finger spans residues 643 to 673 (RSKMWICIKCSYAYNRLWLQTCEMCEAKAEQ). Residues 684–703 (QQQQQQHHHHHLQQQQAEAP) form a disordered region. RanBP2-type zinc fingers lie at residues 704 to 733 (RDEPWTCKKCTLVNYSTAMACVVCGGSKLK) and 744 to 774 (RKGEFWTCSHCTLKNSLHSPVCSACKSHRQP). Disordered regions lie at residues 786–811 (RPDGQSYEEQDAAAVGGGGGSAHQSG) and 860–884 (SLQQQRNSSSSGAIPKRHSTGGSIV). Positions 860-871 (SLQQQRNSSSSG) are enriched in polar residues. The RanBP2-type 6 zinc-finger motif lies at 927 to 956 (STKKWQCPACTYDNCAASVVCDICSSPRGL). Residues 1014-1321 (LFVDDSFPPA…FDCIDICKVR (308 aa)) form the Calpain catalytic domain. Active-site residues include C1079, H1245, and N1265.

The protein belongs to the peptidase C2 family.

Has a role in eye development. Functionally, calcium-regulated non-lysosomal thiol-protease. The chain is Calpain-D (sol) from Drosophila melanogaster (Fruit fly).